The following is a 121-amino-acid chain: Pro-glucagon (121 aa).

Residues 1–21 form the signal peptide; it reads MKGAQYLAGLLLLLFVQNSIC. Residues 80-85 constitute a propeptide that is removed on maturation; sequence SNGGSA.

This sequence belongs to the glucagon family.

The protein resides in the secreted. Functionally, plays a key role in glucose metabolism and homeostasis. Regulates blood glucose by increasing gluconeogenesis and decreasing glycolysis. The chain is Pro-glucagon (gcg) from Carassius auratus (Goldfish).